The chain runs to 313 residues: Aspartate carbamoyltransferase catalytic subunit (313 aa).

Residues Arg-51 and Thr-52 each contribute to the carbamoyl phosphate site. Lys-80 provides a ligand contact to L-aspartate. 3 residues coordinate carbamoyl phosphate: Arg-101, His-129, and Gln-132. The L-aspartate site is built by Arg-162 and Arg-224. Residues Leu-263 and Pro-264 each contribute to the carbamoyl phosphate site.

The protein belongs to the aspartate/ornithine carbamoyltransferase superfamily. ATCase family. In terms of assembly, heterododecamer (2C3:3R2) of six catalytic PyrB chains organized as two trimers (C3), and six regulatory PyrI chains organized as three dimers (R2).

It carries out the reaction carbamoyl phosphate + L-aspartate = N-carbamoyl-L-aspartate + phosphate + H(+). Its pathway is pyrimidine metabolism; UMP biosynthesis via de novo pathway; (S)-dihydroorotate from bicarbonate: step 2/3. Catalyzes the condensation of carbamoyl phosphate and aspartate to form carbamoyl aspartate and inorganic phosphate, the committed step in the de novo pyrimidine nucleotide biosynthesis pathway. This is Aspartate carbamoyltransferase catalytic subunit from Bacteroides thetaiotaomicron (strain ATCC 29148 / DSM 2079 / JCM 5827 / CCUG 10774 / NCTC 10582 / VPI-5482 / E50).